Here is a 201-residue protein sequence, read N- to C-terminus: Recombination protein RecR (201 aa).

The segment at 59–74 adopts a C4-type zinc-finger fold; it reads CEICGNMDTENICRIC. Positions 82-177 constitute a Toprim domain; that stretch reads SIIAIVETVA…KISRLASGIP (96 aa).

This sequence belongs to the RecR family.

Functionally, may play a role in DNA repair. It seems to be involved in an RecBC-independent recombinational process of DNA repair. It may act with RecF and RecO. This Rickettsia rickettsii (strain Iowa) protein is Recombination protein RecR.